The following is a 131-amino-acid chain: Fatty acid-binding protein (131 aa).

(5Z,8Z,11Z,14Z)-eicosatetraenoate is bound by residues Arg106 and 126–128 (RPY). Residues Arg106 and 126 to 128 (RPY) contribute to the (9Z)-octadecenoate site.

Belongs to the calycin superfamily. Fatty-acid binding protein (FABP) family.

Its subcellular location is the cytoplasm. In terms of biological role, FABPs are thought to play a role in the intracellular transport of long-chain fatty acids and their acyl-CoA esters. The chain is Fatty acid-binding protein from Lepidoglyphus destructor (Storage mite).